A 485-amino-acid polypeptide reads, in one-letter code: 3-isopropylmalate dehydratase large subunit (485 aa).

Positions 367, 427, and 430 each coordinate [4Fe-4S] cluster. A compositionally biased stretch (polar residues) spans 439–451 (SPGQRAASTSNRN). Positions 439-462 (SPGQRAASTSNRNFEGRQGKGGRT) are disordered.

It belongs to the aconitase/IPM isomerase family. LeuC type 1 subfamily. As to quaternary structure, heterodimer of LeuC and LeuD. Requires [4Fe-4S] cluster as cofactor.

It catalyses the reaction (2R,3S)-3-isopropylmalate = (2S)-2-isopropylmalate. The protein operates within amino-acid biosynthesis; L-leucine biosynthesis; L-leucine from 3-methyl-2-oxobutanoate: step 2/4. Functionally, catalyzes the isomerization between 2-isopropylmalate and 3-isopropylmalate, via the formation of 2-isopropylmaleate. The polypeptide is 3-isopropylmalate dehydratase large subunit (Actinoplanes teichomyceticus).